The chain runs to 264 residues: Thymidylate synthase (264 aa).

Arginine 21 serves as a coordination point for dUMP. Histidine 51 lines the (6R)-5,10-methylene-5,6,7,8-tetrahydrofolate pocket. A dUMP-binding site is contributed by arginine 126 to arginine 127. The active-site Nucleophile is cysteine 146. DUMP contacts are provided by residues arginine 166–aspartate 169, asparagine 177, and histidine 207–tyrosine 209. Aspartate 169 is a (6R)-5,10-methylene-5,6,7,8-tetrahydrofolate binding site. A (6R)-5,10-methylene-5,6,7,8-tetrahydrofolate-binding site is contributed by alanine 263.

It belongs to the thymidylate synthase family. Bacterial-type ThyA subfamily. In terms of assembly, homodimer.

The protein resides in the cytoplasm. The enzyme catalyses dUMP + (6R)-5,10-methylene-5,6,7,8-tetrahydrofolate = 7,8-dihydrofolate + dTMP. Its pathway is pyrimidine metabolism; dTTP biosynthesis. Functionally, catalyzes the reductive methylation of 2'-deoxyuridine-5'-monophosphate (dUMP) to 2'-deoxythymidine-5'-monophosphate (dTMP) while utilizing 5,10-methylenetetrahydrofolate (mTHF) as the methyl donor and reductant in the reaction, yielding dihydrofolate (DHF) as a by-product. This enzymatic reaction provides an intracellular de novo source of dTMP, an essential precursor for DNA biosynthesis. The sequence is that of Thymidylate synthase from Salmonella arizonae (strain ATCC BAA-731 / CDC346-86 / RSK2980).